Consider the following 859-residue polypeptide: Heterogeneous nuclear ribonucleoprotein U-like protein 1 (859 aa).

Residues 1–103 are necessary for interaction with HRMT1L1; it reads MDVRRLKVNE…GPDGHYVMDN (103 aa). In terms of domain architecture, SAP spans 3 to 37; that stretch reads VRRLKVNELREELQRRGLDTRGLKAELAERLLAAL. The disordered stretch occupies residues 36-131; it reads ALEAEEPEDE…SSYDRRPLDM (96 aa). Acidic residues predominate over residues 38 to 54; the sequence is EAEEPEDERELEADDDP. The span at 77–88 shows a compositional bias: pro residues; that stretch reads QPPPPGLQPHPE. A Glycyl lysine isopeptide (Lys-Gly) (interchain with G-Cter in SUMO1); alternate cross-link involves residue Lys-117. Lys-117 is covalently cross-linked (Glycyl lysine isopeptide (Lys-Gly) (interchain with G-Cter in SUMO2); alternate). Residues 118 to 130 are compositionally biased toward basic and acidic residues; it reads QENESSYDRRPLD. Lys-143 is covalently cross-linked (Glycyl lysine isopeptide (Lys-Gly) (interchain with G-Cter in SUMO1); alternate). Residue Lys-143 forms a Glycyl lysine isopeptide (Lys-Gly) (interchain with G-Cter in SUMO2); alternate linkage. The tract at residues 146-206 is disordered; it reads MKQEAPPSFL…QPPAEEDEDD (61 aa). Residues Lys-147 and Lys-163 each participate in a glycyl lysine isopeptide (Lys-Gly) (interchain with G-Cter in SUMO2) cross-link. Over residues 174-193 the composition is skewed to basic and acidic residues; that stretch reads RPFEENRGRGYFEHREDRRG. A B30.2/SPRY domain is found at 192-389; that stretch reads RGRSPQPPAE…VEFNFGQRAE (198 aa). Residue Ser-195 is modified to Phosphoserine. A Phosphothreonine modification is found at Thr-210. The tract at residues 214–859 is necessary for interaction with TP53; it reads IDTYNCDLHF…GSTQGGTSTQ (646 aa). Residues Lys-271 and Lys-450 each participate in a glycyl lysine isopeptide (Lys-Gly) (interchain with G-Cter in SUMO2) cross-link. Positions 457–595 are necessary for interaction with BRD7 and transcriptional activation; it reads NAIMDKMRVM…EEADKLVRQY (139 aa). A Phosphoserine modification is found at Ser-513. Lys-540 is covalently cross-linked (Glycyl lysine isopeptide (Lys-Gly) (interchain with G-Cter in SUMO2)). Residues 595–612 are compositionally biased toward basic and acidic residues; it reads YNEEGRKAGPPPEKRFDS. Residues 595-814 are disordered; the sequence is YNEEGRKAGP…PPTAQTYPQP (220 aa). 5 tandem repeats follow at residues 613-615, 620-622, 639-641, 645-647, and 659-661. Gly residues-rich tracts occupy residues 613–626 and 634–670; these read RGGGFRGRGGGGGF and PPGGNRGGFQNRGGGGGSGGGGGNYRGGFNRSGGGGY. Residues 613–661 are 5 X 3 AA repeats of R-G-G; the sequence is RGGGFRGRGGGGGFQRYDNRGPPGGNRGGFQNRGGGGGSGGGGGNYRGG. Residues 613 to 661 are necessary for transcription repression; the sequence is RGGGFRGRGGGGGFQRYDNRGPPGGNRGGFQNRGGGGGSGGGGGNYRGG. Arg-639 is modified (asymmetric dimethylarginine). An asymmetric dimethylarginine; alternate mark is found at Arg-645 and Arg-659. Residues Arg-645 and Arg-659 each carry the omega-N-methylarginine; alternate modification. 2 positions are modified to omega-N-methylarginine: Arg-664 and Arg-674. The span at 671-696 shows a compositional bias: low complexity; the sequence is NQNRWGNNNRDNNNSNNRGNYNRAPQ. Over residues 697 to 720 the composition is skewed to pro residues; the sequence is QQPPPQQPPPPQPPPQQPPPPPSY. Ser-721 carries the phosphoserine modification. Positions 728 to 744 are enriched in polar residues; it reads GASSYNKNSNIPGSSAN. Low complexity predominate over residues 745-775; sequence TSTPTVSSYTPPQPSYSQPPYNQGGYTQGYT. Pro residues-rich tracts occupy residues 776–786 and 796–807; these read APPPPPPPPPA and NPAPYTPPPPPT.

As to quaternary structure, interacts with BRD7, PRMT2, TP53 and NXF1. Associates with histones and BRD7. Methylated.

Its subcellular location is the nucleus. In terms of biological role, acts as a basic transcriptional regulator. Represses basic transcription driven by several virus and cellular promoters. When associated with BRD7, activates transcription of glucocorticoid-responsive promoter in the absence of ligand-stimulation. Also plays a role in mRNA processing and transport. Binds avidly to poly(G) and poly(C) RNA homopolymers in vitro. This chain is Heterogeneous nuclear ribonucleoprotein U-like protein 1 (Hnrnpul1), found in Mus musculus (Mouse).